The following is a 190-amino-acid chain: Xanthine phosphoribosyltransferase (190 aa).

Positions 20 and 27 each coordinate xanthine. 128-132 is a binding site for 5-phospho-alpha-D-ribose 1-diphosphate; sequence ANGKA. A xanthine-binding site is contributed by Lys-156.

Belongs to the purine/pyrimidine phosphoribosyltransferase family. Xpt subfamily. In terms of assembly, homodimer.

The protein localises to the cytoplasm. The enzyme catalyses XMP + diphosphate = xanthine + 5-phospho-alpha-D-ribose 1-diphosphate. Its pathway is purine metabolism; XMP biosynthesis via salvage pathway; XMP from xanthine: step 1/1. Functionally, converts the preformed base xanthine, a product of nucleic acid breakdown, to xanthosine 5'-monophosphate (XMP), so it can be reused for RNA or DNA synthesis. The chain is Xanthine phosphoribosyltransferase from Pseudomonas putida (strain ATCC 700007 / DSM 6899 / JCM 31910 / BCRC 17059 / LMG 24140 / F1).